Consider the following 192-residue polypeptide: Transcription termination/antitermination protein NusG (192 aa).

The KOW domain maps to 140–168; it reads VGEVVTVTDGPFETFMGTVEEIDKERNRL.

This sequence belongs to the NusG family.

Its function is as follows. Participates in transcription elongation, termination and antitermination. The protein is Transcription termination/antitermination protein NusG of Rickettsia typhi (strain ATCC VR-144 / Wilmington).